The primary structure comprises 122 residues: Large ribosomal subunit protein uL18 (122 aa).

Residues 1–21 (MSKLSRKQQTQKRHRRLRRHI) are compositionally biased toward basic residues. Residues 1-25 (MSKLSRKQQTQKRHRRLRRHITGTS) are disordered.

This sequence belongs to the universal ribosomal protein uL18 family. As to quaternary structure, part of the 50S ribosomal subunit; part of the 5S rRNA/L5/L18/L25 subcomplex. Contacts the 5S and 23S rRNAs.

Functionally, this is one of the proteins that bind and probably mediate the attachment of the 5S RNA into the large ribosomal subunit, where it forms part of the central protuberance. The sequence is that of Large ribosomal subunit protein uL18 from Synechococcus sp. (strain CC9902).